A 444-amino-acid polypeptide reads, in one-letter code: Elongation factor 1-alpha (444 aa).

Residues 15-236 enclose the tr-type G domain; sequence KPHINLAVVG…VLDTFQPPPR (222 aa). The segment at 24 to 31 is G1; the sequence is GHVDNGKS. Residue 24–31 coordinates GTP; it reads GHVDNGKS. Mg(2+) is bound at residue Ser31. Residues 80 to 84 are G2; the sequence is GVTIE. Residues 101–104 form a G3 region; that stretch reads DLPG. Residues 101-105 and 163-166 each bind GTP; these read DLPGH and NKMD. The interval 163 to 166 is G4; that stretch reads NKMD. A G5 region spans residues 202–204; that stretch reads SAV.

This sequence belongs to the TRAFAC class translation factor GTPase superfamily. Classic translation factor GTPase family. EF-Tu/EF-1A subfamily.

The protein localises to the cytoplasm. The enzyme catalyses GTP + H2O = GDP + phosphate + H(+). Functionally, GTP hydrolase that promotes the GTP-dependent binding of aminoacyl-tRNA to the A-site of ribosomes during protein biosynthesis. In Pyrobaculum arsenaticum (strain DSM 13514 / JCM 11321 / PZ6), this protein is Elongation factor 1-alpha.